Consider the following 418-residue polypeptide: 4-hydroxy-3-methylbut-2-en-1-yl diphosphate synthase (flavodoxin) (418 aa).

[4Fe-4S] cluster-binding residues include cysteine 305, cysteine 308, cysteine 351, and glutamate 358.

Belongs to the IspG family. [4Fe-4S] cluster serves as cofactor.

The enzyme catalyses (2E)-4-hydroxy-3-methylbut-2-enyl diphosphate + oxidized [flavodoxin] + H2O + 2 H(+) = 2-C-methyl-D-erythritol 2,4-cyclic diphosphate + reduced [flavodoxin]. Its pathway is isoprenoid biosynthesis; isopentenyl diphosphate biosynthesis via DXP pathway; isopentenyl diphosphate from 1-deoxy-D-xylulose 5-phosphate: step 5/6. In terms of biological role, converts 2C-methyl-D-erythritol 2,4-cyclodiphosphate (ME-2,4cPP) into 1-hydroxy-2-methyl-2-(E)-butenyl 4-diphosphate. In Bartonella bacilliformis (strain ATCC 35685 / KC583 / Herrer 020/F12,63), this protein is 4-hydroxy-3-methylbut-2-en-1-yl diphosphate synthase (flavodoxin).